A 389-amino-acid polypeptide reads, in one-letter code: NAD-dependent protein deacetylase sirtuin-2 (389 aa).

The interval 1–34 (MAEPDPSDPLETQAGKVQEAQDSDSDTEGGATGG) is disordered. Ala2 carries the N-acetylalanine modification. Phosphoserine is present on residues Ser23 and Ser25. A Phosphothreonine modification is found at Thr27. The short motif at 41 to 51 (LRNLFTQTLGL) is the Nuclear export signal element. Ser53 carries the phosphoserine modification. Residues 57–338 (RLLDELTLEG…LALADLLGWK (282 aa)) form the Deacetylase sirtuin-type domain. Residues 85–89 (AGIST) and 95–97 (DFR) contribute to the NAD(+) site. A Phosphoserine modification is found at Ser100. Residue 167-170 (QNID) coordinates NAD(+). Residue His187 is the Proton acceptor of the active site. Zn(2+) contacts are provided by Cys195, Cys200, Cys221, and Cys224. NAD(+) contacts are provided by residues 262 to 263 (TS), 286 to 288 (NKE), and Cys324. A disordered region spans residues 350–389 (ANIDAQSGSQAPNPSTTISPGKSPPPAKEAARTKEKEEQQ). Residues 353-369 (DAQSGSQAPNPSTTISP) show a composition bias toward polar residues. Residues Ser368 and Ser372 each carry the phosphoserine modification. Positions 378 to 389 (EAARTKEKEEQQ) are enriched in basic and acidic residues.

The protein belongs to the sirtuin family. Class I subfamily. Interacts with CDC20, FOXO3 and FZR1. Associates with microtubule in primary cortical mature neurons. Homotrimer. Interacts (via both phosphorylated, unphosphorylated, active or inactive forms) with HDAC6; the interaction is necessary for the complex to interact with alpha-tubulin, suggesting that these proteins belong to a large complex that deacetylates the cytoskeleton. Interacts with FOXO1; the interaction is disrupted upon serum-starvation or oxidative stress, leading to increased level of acetylated FOXO1 and induction of autophagy. Interacts with RELA; the interaction occurs in the cytoplasm and is increased in a TNF-alpha-dependent manner. Interacts with HOXA10; the interaction is direct. Interacts with YWHAB and YWHAG; the interactions occur in a AKT-dependent manner and increase SIRT2-dependent TP53 deacetylation. Interacts with MAPK1/ERK2 and MAPK3/ERK1; the interactions increase SIRT2 stability and deacetylation activity. Interacts (phosphorylated form) with KMT5A isoform 2; the interaction is direct, stimulates KMT5A-mediated methyltransferase activity on histone at 'Lys-20' (H4K20me1) and is increased in a H(2)O(2)-induced oxidative stress-dependent manner. Interacts with G6PD; the interaction is enhanced by H(2)O(2) treatment. Interacts with a G1/S-specific cyclin E-CDK2 complex. Interacts with AURKA, CDK5R1 (p35 form) and CDK5 and HIF1A. Interacts with the tRNA ligase SARS1; recruited to the VEGFA promoter via interaction with SARS1. Isoform 2 and isoform 4 associate with microtubules in primary cortical mature neurons. Interacts with BEX4; negatively regulates alpha-tubulin deacetylation by SIRT2. The cofactor is Zn(2+). Phosphorylated at phosphoserine and phosphothreonine. Phosphorylated at Ser-368 by a mitotic kinase CDK1/cyclin B at the G2/M transition; phosphorylation regulates the delay in cell-cycle progression. Phosphorylated at Ser-368 by a mitotic kinase G1/S-specific cyclin E/Cdk2 complex; phosphorylation inactivates SIRT2-mediated alpha-tubulin deacetylation and thereby negatively regulates cell adhesion, cell migration and neurite outgrowth during neuronal differentiation. Phosphorylated by cyclin A/Cdk2 and p35-Cdk5 complexes and to a lesser extent by the cyclin D3/Cdk4 and cyclin B/Cdk1, in vitro. Dephosphorylated at Ser-368 by CDC14A and CDC14B around early anaphase. Post-translationally, acetylated by EP300; acetylation leads both to the decreased of SIRT2-mediated alpha-tubulin deacetylase activity and SIRT2-mediated down-regulation of TP53 transcriptional activity. In terms of processing, ubiquitinated. As to expression, isoform 1 is weakly expressed in the cortex at postnatal(P) days P1, P3 and P7, and increases progressively between P17 and older adult cortex. Isoform 1 is also expressed in heart, liver and skeletal muscle, weakly expressed in the striatum and spinal cord. Isoform 2 is not expressed in the cortex at P1, P3 and P7, and increases strongly and progressively between P17 and older adult cortex. Isoform 2 is also expressed in the heart, liver, striatum and spinal cord. Isoform 4 is weakly expressed in older adult cortex and spinal cords. Expressed in the cortex. Expressed in postnatal sciatic nerves during myelination and during remyelination after nerve injury. Expressed in neurons, oligodendrocytes, Schwann cells, Purkinje cells and in astrocytes of white matter. Strongly expressed in preadipocytes compared with differentiated adipocytes. Expressed in cerebellar granule cells. Expressed in the inner ear: in the cochlea, expressed in types I and V fibrocytes in the spiral ligament (SL) and slightly in stria vascularis (SV); in the organ of Corti, expressed in some supporting cells; in the crista ampullaris, expressed in spiral ganglion cells; also expressed in the endolymphatic sac (ES) epithelial cells (at protein level). Expressed in the brain, spinal cord, optic nerve and hippocampus. Strongly expressed in 6-8 week-old ovulated meiosis II oocytes and weakly expressed in 45-58 week-old ovulated meiosis II oocytes. Expressed in the cochlea, vestibule and acoustic nerve of the inner ear.

Its subcellular location is the nucleus. It is found in the cytoplasm. The protein localises to the perinuclear region. The protein resides in the perikaryon. It localises to the cytoskeleton. Its subcellular location is the cell projection. It is found in the growth cone. The protein localises to the myelin membrane. The protein resides in the microtubule organizing center. It localises to the centrosome. Its subcellular location is the spindle. It is found in the chromosome. The protein localises to the midbody. The protein resides in the centriole. It catalyses the reaction N(6)-acetyl-L-lysyl-[protein] + NAD(+) + H2O = 2''-O-acetyl-ADP-D-ribose + nicotinamide + L-lysyl-[protein]. The enzyme catalyses N(6)-tetradecanoyl-L-lysyl-[protein] + NAD(+) + H2O = 2''-O-tetradecanoyl-ADP-D-ribose + nicotinamide + L-lysyl-[protein]. The catalysed reaction is N(6)-hexadecanoyl-L-lysyl-[protein] + NAD(+) + H2O = 2''-O-hexadecanoyl-ADP-D-ribose + nicotinamide + L-lysyl-[protein]. Its activity is regulated as follows. Inhibited by Sirtinol, A3 and M15 small molecules. Inhibited by nicotinamide. Inhibited by a macrocyclic peptide inhibitor S2iL5. Inhibited by EP300-induced acetylation. In terms of biological role, NAD-dependent protein deacetylase, which deacetylates internal lysines on histone and alpha-tubulin as well as many other proteins such as key transcription factors. Participates in the modulation of multiple and diverse biological processes such as cell cycle control, genomic integrity, microtubule dynamics, cell differentiation, metabolic networks, and autophagy. Plays a major role in the control of cell cycle progression and genomic stability. Functions in the antephase checkpoint preventing precocious mitotic entry in response to microtubule stress agents, and hence allowing proper inheritance of chromosomes. Positively regulates the anaphase promoting complex/cyclosome (APC/C) ubiquitin ligase complex activity by deacetylating CDC20 and FZR1, then allowing progression through mitosis. Associates both with chromatin at transcriptional start sites (TSSs) and enhancers of active genes. Plays a role in cell cycle and chromatin compaction through epigenetic modulation of the regulation of histone H4 'Lys-20' methylation (H4K20me1) during early mitosis. Specifically deacetylates histone H4 at 'Lys-16' (H4K16ac) between the G2/M transition and metaphase enabling H4K20me1 deposition by KMT5A leading to ulterior levels of H4K20me2 and H4K20me3 deposition throughout cell cycle, and mitotic S-phase progression. Deacetylates KMT5A modulating KMT5A chromatin localization during the mitotic stress response. Also deacetylates histone H3 at 'Lys-57' (H3K56ac) during the mitotic G2/M transition. During oocyte meiosis progression, may deacetylate histone H4 at 'Lys-16' (H4K16ac) and alpha-tubulin, regulating spindle assembly and chromosome alignment by influencing microtubule dynamics and kinetochore function. Deacetylates histone H4 at 'Lys-16' (H4K16ac) at the VEGFA promoter and thereby contributes to regulate expression of VEGFA, a key regulator of angiogenesis. Deacetylates alpha-tubulin at 'Lys-40' and hence controls neuronal motility, oligodendroglial cell arbor projection processes and proliferation of non-neuronal cells. Phosphorylation at Ser-368 by a G1/S-specific cyclin E-CDK2 complex inactivates SIRT2-mediated alpha-tubulin deacetylation, negatively regulating cell adhesion, cell migration and neurite outgrowth during neuronal differentiation. Deacetylates PARD3 and participates in the regulation of Schwann cell peripheral myelination formation during early postnatal development and during postinjury remyelination. Involved in several cellular metabolic pathways. Plays a role in the regulation of blood glucose homeostasis by deacetylating and stabilizing phosphoenolpyruvate carboxykinase PCK1 activity in response to low nutrient availability. Acts as a key regulator in the pentose phosphate pathway (PPP) by deacetylating and activating the glucose-6-phosphate G6PD enzyme, and therefore, stimulates the production of cytosolic NADPH to counteract oxidative damage. Maintains energy homeostasis in response to nutrient deprivation as well as energy expenditure by inhibiting adipogenesis and promoting lipolysis. Attenuates adipocyte differentiation by deacetylating and promoting FOXO1 interaction to PPARG and subsequent repression of PPARG-dependent transcriptional activity. Plays a role in the regulation of lysosome-mediated degradation of protein aggregates by autophagy in neuronal cells. Deacetylates FOXO1 in response to oxidative stress or serum deprivation, thereby negatively regulating FOXO1-mediated autophagy. Deacetylates a broad range of transcription factors and co-regulators regulating target gene expression. Deacetylates transcriptional factor FOXO3 stimulating the ubiquitin ligase SCF(SKP2)-mediated FOXO3 ubiquitination and degradation. Deacetylates HIF1A and therefore promotes HIF1A degradation and inhibition of HIF1A transcriptional activity in tumor cells in response to hypoxia. Deacetylates RELA in the cytoplasm inhibiting NF-kappaB-dependent transcription activation upon TNF-alpha stimulation. Inhibits transcriptional activation by deacetylating p53/TP53 and EP300. Also deacetylates EIF5A. Functions as a negative regulator on oxidative stress-tolerance in response to anoxia-reoxygenation conditions. Plays a role as tumor suppressor. In addition to protein deacetylase activity, also has activity toward long-chain fatty acyl groups and mediates protein-lysine demyristoylation and depalmitoylation of target proteins, such as ARF6 and KRAS, thereby regulating their association with membranes. Deacetylates alpha-tubulin. The sequence is that of NAD-dependent protein deacetylase sirtuin-2 (Sirt2) from Mus musculus (Mouse).